We begin with the raw amino-acid sequence, 491 residues long: Ketol-acid reductoisomerase (NADP(+)) (491 aa).

The KARI N-terminal Rossmann domain occupies Ala-15 to Ser-208. NADP(+)-binding positions include Cys-45 to Gln-48, Arg-68, Arg-76, Ser-78, and Asp-108 to Gln-110. The active site involves His-132. Position 158 (Gly-158) interacts with NADP(+). KARI C-terminal knotted domains lie at Ser-209–Gln-344 and Tyr-345–Met-484. Asp-217, Glu-221, Glu-389, and Glu-393 together coordinate Mg(2+). A substrate-binding site is contributed by Ser-414.

The protein belongs to the ketol-acid reductoisomerase family. The cofactor is Mg(2+).

The catalysed reaction is (2R)-2,3-dihydroxy-3-methylbutanoate + NADP(+) = (2S)-2-acetolactate + NADPH + H(+). The enzyme catalyses (2R,3R)-2,3-dihydroxy-3-methylpentanoate + NADP(+) = (S)-2-ethyl-2-hydroxy-3-oxobutanoate + NADPH + H(+). It participates in amino-acid biosynthesis; L-isoleucine biosynthesis; L-isoleucine from 2-oxobutanoate: step 2/4. The protein operates within amino-acid biosynthesis; L-valine biosynthesis; L-valine from pyruvate: step 2/4. In terms of biological role, involved in the biosynthesis of branched-chain amino acids (BCAA). Catalyzes an alkyl-migration followed by a ketol-acid reduction of (S)-2-acetolactate (S2AL) to yield (R)-2,3-dihydroxy-isovalerate. In the isomerase reaction, S2AL is rearranged via a Mg-dependent methyl migration to produce 3-hydroxy-3-methyl-2-ketobutyrate (HMKB). In the reductase reaction, this 2-ketoacid undergoes a metal-dependent reduction by NADPH to yield (R)-2,3-dihydroxy-isovalerate. The sequence is that of Ketol-acid reductoisomerase (NADP(+)) from Escherichia fergusonii (strain ATCC 35469 / DSM 13698 / CCUG 18766 / IAM 14443 / JCM 21226 / LMG 7866 / NBRC 102419 / NCTC 12128 / CDC 0568-73).